Consider the following 388-residue polypeptide: Protochlorophyllide reductase A, chloroplastic (388 aa).

Residues 1 to 74 (MALQLLPSTL…SPSGKKTLRQ (74 aa)) constitute a chloroplast transit peptide. The segment covering 48–68 (VATAPSPVTTSPGSTASSPSG) has biased composition (low complexity). Positions 48-69 (VATAPSPVTTSPGSTASSPSGK) are disordered.

Belongs to the short-chain dehydrogenases/reductases (SDR) family. POR subfamily.

Its subcellular location is the plastid. It is found in the chloroplast. It catalyses the reaction chlorophyllide a + NADP(+) = protochlorophyllide a + NADPH + H(+). Its pathway is porphyrin-containing compound metabolism; chlorophyll biosynthesis. Phototransformation of protochlorophyllide (Pchlide) to chlorophyllide (Chlide). The polypeptide is Protochlorophyllide reductase A, chloroplastic (PORA) (Hordeum vulgare (Barley)).